Reading from the N-terminus, the 461-residue chain is Inositol-trisphosphate 3-kinase A (461 aa).

Positions 1–29 (MTLPGGPTGMARPGGARPCSPGLERAPRR) are disordered. A required for cytoskeleton location region spans residues 1 to 133 (MTLPGGPTGM…SVSSTGSSSL (133 aa)). Omega-N-methylarginine occurs at positions 35, 55, and 62. The segment at 49-160 (AAAGEPRARG…GNVQLEAGED (112 aa)) is disordered. Over residues 118–134 (RRLSTSSVSSTGSSSLL) the composition is skewed to low complexity. A phosphoserine mark is found at serine 137 and serine 197. ATP contacts are provided by residues serine 197, lysine 209, 249–251 (QDL), and aspartate 262. Substrate-binding residues include lysine 264 and arginine 285. A calmodulin-binding region spans residues 287 to 295 (DMYKKMLAV). Residue 312 to 319 (KPRYMQWR) coordinates substrate. ATP is bound by residues lysine 336 and aspartate 416. Residue lysine 419 coordinates substrate.

Belongs to the inositol phosphokinase (IPK) family. As to expression, expressed in brain.

Its subcellular location is the cytoplasm. The protein resides in the cytoskeleton. The catalysed reaction is 1D-myo-inositol 1,4,5-trisphosphate + ATP = 1D-myo-inositol 1,3,4,5-tetrakisphosphate + ADP + H(+). Its activity is regulated as follows. Activated by calcium/calmodulin. Functionally, catalyzes the phosphorylation of 1D-myo-inositol 1,4,5-trisphosphate (InsP3) into 1D-myo-inositol 1,3,4,5-tetrakisphosphate and participates to the regulation of calcium homeostasis. This Homo sapiens (Human) protein is Inositol-trisphosphate 3-kinase A.